Here is a 228-residue protein sequence, read N- to C-terminus: Isoprenyl transferase (228 aa).

The active site involves Asp-9. Asp-9 provides a ligand contact to Mg(2+). Substrate contacts are provided by residues 10–13 (GNGR), Trp-14, Arg-22, His-26, and 54–56 (STE). Asn-57 (proton acceptor) is an active-site residue. Residues Trp-58, Arg-60, Arg-175, and 181–183 (RMS) contribute to the substrate site. Glu-194 provides a ligand contact to Mg(2+).

Belongs to the UPP synthase family. In terms of assembly, homodimer. It depends on Mg(2+) as a cofactor.

Catalyzes the condensation of isopentenyl diphosphate (IPP) with allylic pyrophosphates generating different type of terpenoids. The polypeptide is Isoprenyl transferase (Treponema pallidum (strain Nichols)).